A 58-amino-acid chain; its full sequence is Ribosome modulation factor (58 aa).

Belongs to the ribosome modulation factor family.

It is found in the cytoplasm. During stationary phase, converts 70S ribosomes to an inactive dimeric form (100S ribosomes). The protein is Ribosome modulation factor of Shewanella amazonensis (strain ATCC BAA-1098 / SB2B).